A 673-amino-acid chain; its full sequence is Zinc finger protein 16 (673 aa).

A compositionally biased stretch (basic and acidic residues) spans 1 to 10 (MPSLRTRREE). Residues 1 to 42 (MPSLRTRREEAEMELSAPGPSPWTPAPQARVSDAPAVTHPGS) form a disordered region. The segment at 62 to 210 (YQQPDCDTRT…GVPTAESPLI (149 aa)) is necessary for transcription activation. The C2H2-type 1; degenerate zinc finger occupies 209–231 (LICNECGKTFRGNPDLIQRQIVH). The C2H2-type 2; degenerate zinc-finger motif lies at 237–259 (FMCDDCGKTFSQNSVLKNRHXSH). Lysine 253 participates in a covalent cross-link: Glycyl lysine isopeptide (Lys-Gly) (interchain with G-Cter in SUMO2). 7 consecutive C2H2-type zinc fingers follow at residues 284 to 306 (YTCT…QKSH), 312 to 334 (YECN…QRIH), 340 to 362 (YVCS…HRTH), 368 to 390 (FECG…QRVH), 396 to 418 (YECN…HRVH), 424 to 446 (YKCS…RRIH), and 452 to 474 (HVCN…QIIH). Residues 332–364 (RIHSGEKPYVCSECGKAFRRSSNLIKHHRTHTG) form a required for nuclear localization region. The interval 464 to 494 (SSVLRKHQIIHTGEKPYRCSVCGKAFSHSSA) is required for nuclear localization. Lysine 478 carries the N6-acetyllysine modification. 7 C2H2-type zinc fingers span residues 480-502 (YRCS…QGVH), 508-530 (YACH…QRVH), 536-558 (YECT…QRIH), 564-586 (HECN…QKVH), 592-614 (YTCV…QIIH), 620-642 (YKCS…QRIH), and 648-670 (YDCA…QLIH).

Belongs to the krueppel C2H2-type zinc-finger protein family. As to quaternary structure, interacts with INCA1; the interaction inhibits INCA1 activity and induces the cell cycle process.

Its subcellular location is the nucleus. In terms of biological role, acts as a transcriptional activator. Promotes cell proliferation by facilitating the cell cycle phase transition from the S to G2/M phase. Involved in both the hemin- and phorbol myristate acetate (PMA)-induced erythroid and megakaryocytic differentiation, respectively. Also plays a role as an inhibitor of cell apoptosis. In Pan paniscus (Pygmy chimpanzee), this protein is Zinc finger protein 16 (ZNF16).